An 845-amino-acid polypeptide reads, in one-letter code: Protein P (845 aa).

Residues 1–179 (MPLSYQHFRK…FCGSPYSWEQ (179 aa)) form a terminal protein domain (TP) region. The segment at 180-348 (ELHHGRSVTK…YCLSHLVNLL (169 aa)) is spacer. Disordered stretches follow at residues 186-205 (SVTK…QPSG), 222-245 (QPRL…SGSI), and 288-318 (YSHL…RSQS). A compositionally biased stretch (polar residues) spans 289 to 301 (SHLSTSKRQSSSG). The tract at residues 349 to 692 (EDWGPCADHG…YMNLYPVARQ (344 aa)) is polymerase/reverse transcriptase domain (RT). One can recognise a Reverse transcriptase domain in the interval 359–602 (EHHIRIPRTP…YSLNFMGYII (244 aa)). The Mg(2+) site is built by aspartate 431, aspartate 553, and aspartate 554.

The protein belongs to the hepadnaviridae P protein family.

The catalysed reaction is DNA(n) + a 2'-deoxyribonucleoside 5'-triphosphate = DNA(n+1) + diphosphate. It carries out the reaction Endonucleolytic cleavage to 5'-phosphomonoester.. Its activity is regulated as follows. Activated by host HSP70 and HSP40 in vitro to be able to bind the epsilon loop of the pgRNA. Because deletion of the RNase H region renders the protein partly chaperone-independent, the chaperones may be needed indirectly to relieve occlusion of the RNA-binding site by this domain. Inhibited by several reverse-transcriptase inhibitors: Lamivudine, Adefovir and Entecavir. Its function is as follows. Multifunctional enzyme that converts the viral RNA genome into dsDNA in viral cytoplasmic capsids. This enzyme displays a DNA polymerase activity that can copy either DNA or RNA templates, and a ribonuclease H (RNase H) activity that cleaves the RNA strand of RNA-DNA heteroduplexes in a partially processive 3'- to 5'-endonucleasic mode. Neo-synthesized pregenomic RNA (pgRNA) are encapsidated together with the P protein, and reverse-transcribed inside the nucleocapsid. Initiation of reverse-transcription occurs first by binding the epsilon loop on the pgRNA genome, and is initiated by protein priming, thereby the 5'-end of (-)DNA is covalently linked to P protein. Partial (+)DNA is synthesized from the (-)DNA template and generates the relaxed circular DNA (RC-DNA) genome. After budding and infection, the RC-DNA migrates in the nucleus, and is converted into a plasmid-like covalently closed circular DNA (cccDNA). The activity of P protein does not seem to be necessary for cccDNA generation, and is presumably released from (+)DNA by host nuclear DNA repair machinery. In Hepatitis B virus genotype A3 (isolate Cameroon/CMR711/1994) (HBV-A), this protein is Protein P.